A 360-amino-acid polypeptide reads, in one-letter code: Phospho-N-acetylmuramoyl-pentapeptide-transferase (360 aa).

10 helical membrane passes run 3–23 (SILV…PYLI), 52–72 (MGGV…HLTV), 81–101 (GLLV…DDFI), 115–135 (AKLV…MQFA), 153–173 (ITVI…AISG), 187–207 (LAGG…FWQF), 230–250 (IALV…WNAA), 254–274 (IFMG…LSMV), 282–302 (IIIG…IVVF), and 333–353 (FWVL…ADWL).

It belongs to the glycosyltransferase 4 family. MraY subfamily. The cofactor is Mg(2+).

The protein resides in the cell membrane. The enzyme catalyses UDP-N-acetyl-alpha-D-muramoyl-L-alanyl-gamma-D-glutamyl-meso-2,6-diaminopimeloyl-D-alanyl-D-alanine + di-trans,octa-cis-undecaprenyl phosphate = di-trans,octa-cis-undecaprenyl diphospho-N-acetyl-alpha-D-muramoyl-L-alanyl-D-glutamyl-meso-2,6-diaminopimeloyl-D-alanyl-D-alanine + UMP. The protein operates within cell wall biogenesis; peptidoglycan biosynthesis. Its function is as follows. Catalyzes the initial step of the lipid cycle reactions in the biosynthesis of the cell wall peptidoglycan: transfers peptidoglycan precursor phospho-MurNAc-pentapeptide from UDP-MurNAc-pentapeptide onto the lipid carrier undecaprenyl phosphate, yielding undecaprenyl-pyrophosphoryl-MurNAc-pentapeptide, known as lipid I. The sequence is that of Phospho-N-acetylmuramoyl-pentapeptide-transferase from Saccharopolyspora erythraea (strain ATCC 11635 / DSM 40517 / JCM 4748 / NBRC 13426 / NCIMB 8594 / NRRL 2338).